Reading from the N-terminus, the 253-residue chain is 3-deoxy-manno-octulosonate cytidylyltransferase (253 aa).

This sequence belongs to the KdsB family.

It is found in the cytoplasm. It catalyses the reaction 3-deoxy-alpha-D-manno-oct-2-ulosonate + CTP = CMP-3-deoxy-beta-D-manno-octulosonate + diphosphate. The protein operates within nucleotide-sugar biosynthesis; CMP-3-deoxy-D-manno-octulosonate biosynthesis; CMP-3-deoxy-D-manno-octulosonate from 3-deoxy-D-manno-octulosonate and CTP: step 1/1. Its pathway is bacterial outer membrane biogenesis; lipopolysaccharide biosynthesis. In terms of biological role, activates KDO (a required 8-carbon sugar) for incorporation into bacterial lipopolysaccharide in Gram-negative bacteria. This is 3-deoxy-manno-octulosonate cytidylyltransferase from Aeromonas hydrophila subsp. hydrophila (strain ATCC 7966 / DSM 30187 / BCRC 13018 / CCUG 14551 / JCM 1027 / KCTC 2358 / NCIMB 9240 / NCTC 8049).